A 166-amino-acid chain; its full sequence is Deglycase PfpI (166 aa).

The PfpI endopeptidase domain occupies 1-166 (MKILFLSANE…WMREFVKLLK (166 aa)). C100 acts as the Nucleophile in catalysis. Residue H101 is part of the active site.

It belongs to the peptidase C56 family. Homooligomer. Exists in two functional species: the predominant form is a homohexamer that comprises about 90% of the total activity, and the minor form is trimeric.

It localises to the cytoplasm. It catalyses the reaction N(omega)-(1-hydroxy-2-oxopropyl)-L-arginyl-[protein] + H2O = lactate + L-arginyl-[protein] + H(+). The enzyme catalyses N(6)-(1-hydroxy-2-oxopropyl)-L-lysyl-[protein] + H2O = lactate + L-lysyl-[protein] + H(+). It carries out the reaction S-(1-hydroxy-2-oxopropyl)-L-cysteinyl-[protein] + H2O = lactate + L-cysteinyl-[protein] + H(+). The catalysed reaction is N(omega)-(1-hydroxy-2-oxoethyl)-L-arginyl-[protein] + H2O = L-arginyl-[protein] + glycolate + H(+). It catalyses the reaction N(6)-(1-hydroxy-2-oxoethyl)-L-lysyl-[protein] + H2O = glycolate + L-lysyl-[protein] + H(+). The enzyme catalyses S-(1-hydroxy-2-oxoethyl)-L-cysteinyl-[protein] + H2O = glycolate + L-cysteinyl-[protein] + H(+). Functionally, deglycase that catalyzes the deglycation of the Maillard adducts formed between amino groups of proteins and reactive carbonyl groups of glyoxals. Thus, functions as a protein deglycase that repairs methylglyoxal- and glyoxal-glycated proteins, and releases repaired proteins and lactate or glycolate, respectively. Deglycates cysteine, arginine and lysine residues in proteins, and thus reactivates these proteins by reversing glycation by glyoxals. Thus, was shown to afford full protection against glycation of thioredoxin by glyoxal. Acts on early glycation intermediates (hemithioacetals and aminocarbinols), preventing the formation of advanced glycation endproducts (AGE) that cause irreversible damage. Prevents acrylamide formation in asparagine/glyoxal and asparagine/sugar mixtures, likely by degrading asparagine/glyoxal Maillard adducts formed at high temperatures. Also displays proteolytic activity. Cleaves at the carboxyl side of both basic and hydrophobic residues in the P1 position, indicating trypsin- and chymotrypsin-like specificities. The protein is Deglycase PfpI of Pyrococcus furiosus (strain ATCC 43587 / DSM 3638 / JCM 8422 / Vc1).